A 293-amino-acid polypeptide reads, in one-letter code: Elongation factor Ts (293 aa).

Residues 81 to 84 are involved in Mg(2+) ion dislocation from EF-Tu; that stretch reads TDFV.

The protein belongs to the EF-Ts family.

It localises to the cytoplasm. Its function is as follows. Associates with the EF-Tu.GDP complex and induces the exchange of GDP to GTP. It remains bound to the aminoacyl-tRNA.EF-Tu.GTP complex up to the GTP hydrolysis stage on the ribosome. The chain is Elongation factor Ts from Methylococcus capsulatus (strain ATCC 33009 / NCIMB 11132 / Bath).